Here is a 78-residue protein sequence, read N- to C-terminus: Exodeoxyribonuclease 7 small subunit (78 aa).

This sequence belongs to the XseB family. As to quaternary structure, heterooligomer composed of large and small subunits.

Its subcellular location is the cytoplasm. It carries out the reaction Exonucleolytic cleavage in either 5'- to 3'- or 3'- to 5'-direction to yield nucleoside 5'-phosphates.. Functionally, bidirectionally degrades single-stranded DNA into large acid-insoluble oligonucleotides, which are then degraded further into small acid-soluble oligonucleotides. The sequence is that of Exodeoxyribonuclease 7 small subunit from Pediococcus pentosaceus (strain ATCC 25745 / CCUG 21536 / LMG 10740 / 183-1w).